The primary structure comprises 400 residues: MRILHTSDWHLGQNFYSKSREAEHQAFLDWLLETAQTHQVDAIIVAGDVFDTGSPPSYARTLYNRFVVNLQQTGCHLVVLAGNHDSVATLNESRDIMAFLNTTVVASAGHAPQILPRRDGTPGAVLCPIPFLRPRDIITSQAGLNGIEKQQHLLAAITDYYQQHYADACKLRGDQPLPIIATGHLTTVGASKSDAVRDIYIGTLDAFPAQNFPPADYIALGHIHRAQIIGGMEHVRYCGSPIPLSFDECGKSKYVHLVTFSNGKLESVENLNVPVTQPMAVLKGDLASITAQLEQWRDVSQEPPVWLDIEITTDEYLHDIQRKIQALTESLPVEVLLVRRSREQRERVLASQQRETLSELSVEEVFNRRLALEELDESQQQRLQHLFTTTLHTLAGEHEA.

It belongs to the SbcD family. As to quaternary structure, heterodimer of SbcC and SbcD.

In terms of biological role, sbcCD cleaves DNA hairpin structures. These structures can inhibit DNA replication and are intermediates in certain DNA recombination reactions. The complex acts as a 3'-&gt;5' double strand exonuclease that can open hairpins. It also has a 5' single-strand endonuclease activity. This is Nuclease SbcCD subunit D (sbcD) from Escherichia coli O157:H7.